A 77-amino-acid polypeptide reads, in one-letter code: Putative defensin-like protein 60 (77 aa).

A signal peptide spans 1 to 25; the sequence is MKMNITKSYVILFLVVVMTNSLSNS. Intrachain disulfides connect C41–C75, C45–C68, C54–C73, and C58–C74.

The protein belongs to the DEFL family.

The protein resides in the secreted. This Arabidopsis thaliana (Mouse-ear cress) protein is Putative defensin-like protein 60.